The following is a 208-amino-acid chain: Granulocyte colony-stimulating factor (208 aa).

A signal peptide spans 1 to 30 (MAQLSAQRRMKLMALQLLLWQSALWSGREA). Disulfide bonds link Cys-72–Cys-78 and Cys-100–Cys-110. The O-linked (GalNAc...) threonine glycan is linked to Thr-169.

The protein belongs to the IL-6 superfamily. As to quaternary structure, monomer. In terms of processing, O-glycosylated.

It localises to the secreted. Granulocyte/macrophage colony-stimulating factors are cytokines that act in hematopoiesis by controlling the production, differentiation, and function of 2 related white cell populations of the blood, the granulocytes and the monocytes-macrophages. This CSF induces granulocytes. This chain is Granulocyte colony-stimulating factor (Csf3), found in Mus musculus (Mouse).